Reading from the N-terminus, the 517-residue chain is Maturase K (517 aa).

It belongs to the intron maturase 2 family. MatK subfamily.

The protein localises to the plastid. Its subcellular location is the chloroplast. Usually encoded in the trnK tRNA gene intron. Probably assists in splicing its own and other chloroplast group II introns. The sequence is that of Maturase K from Trillium grandiflorum (Large-flowered trillium).